The primary structure comprises 393 residues: CCCH-type zinc finger protein oma-2 (393 aa).

Residues 1–26 (MDMLKENVIQNNEARTESSVEPSHPD) are disordered. Basic and acidic residues predominate over residues 14-26 (ARTESSVEPSHPD). 2 consecutive C3H1-type zinc fingers follow at residues 105-133 (SYKT…HGEE) and 147-175 (KYRT…HPDN). Disordered regions lie at residues 227-251 (TPDE…RYEL) and 311-340 (KQST…LTAA). Over residues 313–340 (STPGGVSGYSSSGSTPSQDSDSSPLTAA) the composition is skewed to low complexity. Phosphothreonine; by GSK3 is present on Thr327.

Exclusively expressed in the hermaphrodite gonad. Expression only in cellulized oocytes. Widely distributed throughout gonadal oocytes from the mitotic stage to the developing diakinesis stage.

It is found in the cytoplasm. It localises to the cytoplasmic granule. The protein localises to the cytoskeleton. Its subcellular location is the microtubule organizing center. The protein resides in the centrosome. Zinc-finger RNA-binding protein that binds to 5'-UA[AU]-3' motifs in the 3'-UTR of maternal mRNAs to suppress translation in oocytes and embryos. Acts redundantly with oma-1 to control the temporal expression and distribution of maternal proteins and thereby promote meiotic progression, oocyte maturation, fertilization and embryonic development. Also, together with oma-1, is involved in P-granule distribution during embryonic development. In Caenorhabditis elegans, this protein is CCCH-type zinc finger protein oma-2.